The following is a 167-amino-acid chain: NADH-ubiquinone oxidoreductase chain 6 (167 aa).

The next 5 membrane-spanning stretches (helical) occupy residues 1 to 21, 27 to 47, 50 to 70, 88 to 108, and 143 to 163; these read MKMM…VAFA, VYGG…VVSL, VFLG…VFGY, VALS…LMSG, and WALV…LEVV.

It belongs to the complex I subunit 6 family. As to quaternary structure, core subunit of respiratory chain NADH dehydrogenase (Complex I) which is composed of 45 different subunits.

The protein localises to the mitochondrion inner membrane. It catalyses the reaction a ubiquinone + NADH + 5 H(+)(in) = a ubiquinol + NAD(+) + 4 H(+)(out). Functionally, core subunit of the mitochondrial membrane respiratory chain NADH dehydrogenase (Complex I) which catalyzes electron transfer from NADH through the respiratory chain, using ubiquinone as an electron acceptor. Essential for the catalytic activity and assembly of complex I. The polypeptide is NADH-ubiquinone oxidoreductase chain 6 (MT-ND6) (Osphranter robustus (Wallaroo)).